Consider the following 2108-residue polypeptide: Kinesin-like protein KIF26B (2108 aa).

Disordered regions lie at residues 1 to 124 (MNSV…PGSD) and 263 to 287 (KHGSKPSSLGVSNGAEKKSGSPTHQ). Residues 40–50 (WYRKAYEESRA) show a composition bias toward basic and acidic residues. Positions 58–98 (GAGSALGSSGTPSPGSGTSSPSSFTGSPGPASPGIGTSSPG) are enriched in low complexity. Gly residues predominate over residues 99–120 (SLGGSPGFGTGSPGSGSGGGSS). In terms of domain architecture, Kinesin motor spans 450–801 (KVKVMLRICS…IQIASRVLRM (352 aa)). 546–553 (GHAKLGKS) is a binding site for ATP. Disordered stretches follow at residues 805-825 (KTKYTSSSSGGESSCEEGRMR), 876-917 (SDKE…GKSE), 937-1166 (DGSE…ESKK), 1406-1504 (EPEA…PVTD), 1519-1653 (GLAT…SSSK), 1685-1799 (AESL…ASKL), and 1824-1974 (RAGP…WVDG). Residues 1004–1046 (SHSPVPAAAPAHSPSPASPRSVPGSSSQHSASPLVQSPSLQSS) show a composition bias toward low complexity. The span at 1424-1461 (RESKENSAKKEMKFEDPWLKREEEVKKETAHPNEEGMM) shows a compositional bias: basic and acidic residues. The segment covering 1491 to 1500 (SSSSGEVSAS) has biased composition (low complexity). Composition is skewed to polar residues over residues 1521–1537 (ATQSPVHPNKSVKSSSL) and 1611–1628 (RASPQHSASGSGTSSPLN). Low complexity-rich tracts occupy residues 1713–1730 (SAGTSPPSSGASPKAGQS) and 1751–1763 (STTKTLSFSTKSL). The span at 1781 to 1795 (PWSTQSLSRNRSSGL) shows a compositional bias: polar residues. Positions 1824–1836 (RAGPEAEARGGAL) are enriched in low complexity. Thr-1855 is subject to Phosphothreonine. Composition is skewed to polar residues over residues 1866 to 1875 (GHGSDNSSVL) and 1907 to 1925 (ATGSASSAQDSTSENSSSV). The segment covering 1930 to 1948 (RSLKTPKKRSNPGSQRRRL) has biased composition (basic residues). Polar residues predominate over residues 1954–1968 (LDTSSPVRKPPNSTG). Ser-1958 is modified (phosphoserine).

The protein belongs to the TRAFAC class myosin-kinesin ATPase superfamily. Kinesin family. KIF26 subfamily. In terms of assembly, interacts with MYH10. Post-translationally, phosphorylation at Thr-1855 and Ser-1958 by CDKs, mainly CDK2 and CDK5, enhances the interaction with NEDD4, polyubiquitination, and subsequent proteasomal degradation. Phosphorylation occurs upon loss of interaction with microtubules. In terms of processing, polyubiquitinated by NEDD4, resulting in proteasomal degradation.

It is found in the cytoplasm. The protein resides in the cytoskeleton. Its function is as follows. Essential for embryonic kidney development. Plays an important role in the compact adhesion between mesenchymal cells adjacent to the ureteric buds, possibly by interacting with MYH10. This could lead to the establishment of the basolateral integrity of the mesenchyme and the polarized expression of ITGA8, which maintains the GDNF expression required for further ureteric bud attraction. Although it seems to lack ATPase activity it is constitutively associated with microtubules. The sequence is that of Kinesin-like protein KIF26B (KIF26B) from Homo sapiens (Human).